A 159-amino-acid chain; its full sequence is Ribose-5-phosphate isomerase B (159 aa).

D-ribulose 5-phosphate contacts are provided by residues 8–9 (DH) and 67–71 (GSGNG). The Proton acceptor role is filled by E72. H99 acts as the Proton donor in catalysis. D-ribulose 5-phosphate-binding residues include N100, R110, R134, and R138.

This sequence belongs to the LacAB/RpiB family. Homodimer.

It carries out the reaction aldehydo-D-ribose 5-phosphate = D-ribulose 5-phosphate. The protein operates within carbohydrate degradation; pentose phosphate pathway; D-ribose 5-phosphate from D-ribulose 5-phosphate (non-oxidative stage): step 1/1. Catalyzes the interconversion of ribulose-5-P and ribose-5-P. The chain is Ribose-5-phosphate isomerase B from Mycolicibacterium paratuberculosis (strain ATCC BAA-968 / K-10) (Mycobacterium paratuberculosis).